The chain runs to 507 residues: tRNA (guanine(6)-N(2))-methyltransferase THUMP3 (507 aa).

The 121-residue stretch at 165–285 (KIDQRNVKKE…DNEVIVGIAL (121 aa)) folds into the THUMP domain.

The protein belongs to the methyltransferase superfamily. Part of the heterodimeric THUMPD3-TRM112 methyltransferase complex; this complex forms an active tRNA methyltransferase, where TRMT112 acts as an activator of the catalytic subunit THUMPD3.

The protein localises to the cytoplasm. The enzyme catalyses guanosine(6) in tRNA + S-adenosyl-L-methionine = N(2)-methylguanosine(6) in tRNA + S-adenosyl-L-homocysteine + H(+). It catalyses the reaction guanosine(7) in tRNA + S-adenosyl-L-methionine = N(2)-methylguanosine(7) in tRNA + S-adenosyl-L-homocysteine + H(+). In terms of biological role, catalytic subunit of the THUMPD3-TRM112 methyltransferase complex, that specifically mediates the S-adenosyl-L-methionine-dependent N(2)-methylation of guanosine nucleotide at position 6 (m2G6) in tRNAs. This is one of the major tRNA (guanine-N(2))-methyltransferases. Also catalyzes the S-adenosyl-L-methionine-dependent N(2)-methylation of guanosine nucleotide at position 7 of tRNA(Trp). This Homo sapiens (Human) protein is tRNA (guanine(6)-N(2))-methyltransferase THUMP3.